Reading from the N-terminus, the 104-residue chain is Large ribosomal subunit protein uL24 (104 aa).

It belongs to the universal ribosomal protein uL24 family. Part of the 50S ribosomal subunit.

In terms of biological role, one of two assembly initiator proteins, it binds directly to the 5'-end of the 23S rRNA, where it nucleates assembly of the 50S subunit. One of the proteins that surrounds the polypeptide exit tunnel on the outside of the subunit. The chain is Large ribosomal subunit protein uL24 from Bartonella tribocorum (strain CIP 105476 / IBS 506).